Reading from the N-terminus, the 209-residue chain is PRA1 family protein A2 (209 aa).

The next 4 membrane-spanning stretches (helical) occupy residues L51 to T72, A76 to F98, R142 to G162, and L163 to I183.

This sequence belongs to the PRA1 family.

It localises to the endosome membrane. Functionally, may be involved in both secretory and endocytic intracellular trafficking in the endosomal/prevacuolar compartments. This Arabidopsis thaliana (Mouse-ear cress) protein is PRA1 family protein A2 (PRA1A2).